The primary structure comprises 386 residues: ORC1-type DNA replication protein 3 (386 aa).

ATP-binding positions include 65-69 (TGKTF) and Tyr-206.

Belongs to the CDC6/cdc18 family.

In terms of biological role, involved in regulation of DNA replication. This is ORC1-type DNA replication protein 3 (cdc6-3) from Sulfurisphaera tokodaii (strain DSM 16993 / JCM 10545 / NBRC 100140 / 7) (Sulfolobus tokodaii).